Consider the following 464-residue polypeptide: GTPase Der (464 aa).

EngA-type G domains lie at 5-169 (PTIA…KQKG) and 190-368 (IKVA…RESH). Residues 11–18 (GRPNVGKS), 58–62 (DTGGI), 121–124 (NKAD), 196–203 (GRPNAGKS), 243–247 (DTAGM), and 308–311 (NKFD) each bind GTP. The 93-residue stretch at 369 to 461 (NLPTTGQLNR…PVIFSARSRV (93 aa)) folds into the KH-like domain.

This sequence belongs to the TRAFAC class TrmE-Era-EngA-EngB-Septin-like GTPase superfamily. EngA (Der) GTPase family. Associates with the 50S ribosomal subunit.

Functionally, GTPase that plays an essential role in the late steps of ribosome biogenesis. The sequence is that of GTPase Der from Akkermansia muciniphila (strain ATCC BAA-835 / DSM 22959 / JCM 33894 / BCRC 81048 / CCUG 64013 / CIP 107961 / Muc).